The sequence spans 235 residues: Large ribosomal subunit protein uL3 (235 aa).

Residues 138-157 (SVSHRSHGSTGGRQDPGKTF) are disordered. Residue Q151 is modified to N5-methylglutamine.

The protein belongs to the universal ribosomal protein uL3 family. Part of the 50S ribosomal subunit. Forms a cluster with proteins L14 and L19. Post-translationally, methylated by PrmB.

In terms of biological role, one of the primary rRNA binding proteins, it binds directly near the 3'-end of the 23S rRNA, where it nucleates assembly of the 50S subunit. This Rhodospirillum centenum (strain ATCC 51521 / SW) protein is Large ribosomal subunit protein uL3.